The primary structure comprises 217 residues: Imidazole glycerol phosphate synthase subunit HisH (217 aa).

Positions 1 to 212 (MLAILDYKAG…YEYCRQSRQE (212 aa)) constitute a Glutamine amidotransferase type-1 domain. Cysteine 79 acts as the Nucleophile in catalysis. Active-site residues include histidine 187 and glutamate 189.

In terms of assembly, heterodimer of HisH and HisF.

It is found in the cytoplasm. It carries out the reaction 5-[(5-phospho-1-deoxy-D-ribulos-1-ylimino)methylamino]-1-(5-phospho-beta-D-ribosyl)imidazole-4-carboxamide + L-glutamine = D-erythro-1-(imidazol-4-yl)glycerol 3-phosphate + 5-amino-1-(5-phospho-beta-D-ribosyl)imidazole-4-carboxamide + L-glutamate + H(+). The enzyme catalyses L-glutamine + H2O = L-glutamate + NH4(+). It participates in amino-acid biosynthesis; L-histidine biosynthesis; L-histidine from 5-phospho-alpha-D-ribose 1-diphosphate: step 5/9. IGPS catalyzes the conversion of PRFAR and glutamine to IGP, AICAR and glutamate. The HisH subunit catalyzes the hydrolysis of glutamine to glutamate and ammonia as part of the synthesis of IGP and AICAR. The resulting ammonia molecule is channeled to the active site of HisF. This chain is Imidazole glycerol phosphate synthase subunit HisH, found in Desulfovibrio desulfuricans (strain ATCC 27774 / DSM 6949 / MB).